Reading from the N-terminus, the 810-residue chain is Phospholipase D alpha 1 (810 aa).

The region spanning 1-126 is the C2 domain; that stretch reads MAQHLLHGTL…INGEEVDQWV (126 aa). Aspartate 187 contributes to the Ca(2+) binding site. In terms of domain architecture, PLD phosphodiesterase 1 spans 327 to 366; sequence TMFTHHQKIVVVDSEMPSRGGSEMRRIVSFVGGIDLCDGR. Residues histidine 332, lysine 334, and aspartate 339 contribute to the active site. Histidine 332 provides a ligand contact to a 1,2-diacyl-sn-glycero-3-phosphate. Histidine 372 and histidine 406 together coordinate Ca(2+). Residues glutamine 522 and histidine 661 each coordinate a 1,2-diacyl-sn-glycero-3-phosphate. A PLD phosphodiesterase 2 domain is found at 656 to 683; the sequence is FMIYVHTKMMIVDDEYIIIGSANINQRS. Catalysis depends on residues histidine 661, lysine 663, and aspartate 668. Glutamate 722 contributes to the Ca(2+) binding site.

Belongs to the phospholipase D family. C2-PLD subfamily. In terms of assembly, interacts with GPA1. This binding inhibits PLDALPHA1 activity and is relieved by GTP. Ca(2+) serves as cofactor. In terms of tissue distribution, highly expressed in roots, stems and flowers, moderately in leaves, seedlings and siliques. Not detected in seeds.

Its subcellular location is the cytoplasm. It is found in the cell membrane. The protein resides in the mitochondrion membrane. It localises to the microsome membrane. The protein localises to the vacuole. Its subcellular location is the cytoplasmic vesicle. It is found in the clathrin-coated vesicle. The enzyme catalyses a 1,2-diacyl-sn-glycero-3-phosphocholine + H2O = a 1,2-diacyl-sn-glycero-3-phosphate + choline + H(+). With respect to regulation, not inhibited by neomycin. Its function is as follows. Hydrolyzes glycerol-phospholipids at the terminal phosphodiesteric bond to generate phosphatidic acids (PA). Plays an important role in various cellular processes, including phytohormone action and response to stress, characterized by acidification of the cell. Involved in wound induction of jasmonic acid. May be involved in membrane lipid remodeling. Probably involved in freezing tolerance by modulating the cold-responsive genes and accumulation of osmolytes. Can use phosphatidylcholine (PC), phosphatidylethanolamine (PE) and phosphatidylglycerol (PG) as substrates, both in presence or in absence of PIP2. Its main substrate is phosphatidylcholine. Stimulates the intrinsic GTPase activity of GPA1 upon binding. Mediates the abscisic acid effects on stomata through interaction with GPA1 and the production of phosphatidic acid that bind to ABI1. Involved in seed aging and deterioration. Involved in microtubule stabilization and salt tolerance. Involved in abscisic acid-induced stomatal closure. This chain is Phospholipase D alpha 1, found in Arabidopsis thaliana (Mouse-ear cress).